Consider the following 248-residue polypeptide: ATP synthase subunit a, chloroplastic (248 aa).

Helical transmembrane passes span 38–58, 96–116, 135–155, 200–220, and 221–241; these read QVLI…AIAV, VPFI…GALL, INTT…AGLT, LVVV…VMFL, and GLFT…AYIG.

This sequence belongs to the ATPase A chain family. In terms of assembly, F-type ATPases have 2 components, CF(1) - the catalytic core - and CF(0) - the membrane proton channel. CF(1) has five subunits: alpha(3), beta(3), gamma(1), delta(1), epsilon(1). CF(0) has four main subunits: a, b, b' and c.

It localises to the plastid. The protein resides in the chloroplast thylakoid membrane. Key component of the proton channel; it plays a direct role in the translocation of protons across the membrane. This chain is ATP synthase subunit a, chloroplastic, found in Nuphar advena (Common spatterdock).